Consider the following 418-residue polypeptide: MTDFNIATMAQKAKQASRVAAQLNSSEKNALLNDIATAIENNSDAIIQENSKDIAAGREKGLSQAMLDRLVLTDKGIKDMSSAIREIVALTDPVGDVDKLSLRPNGIQVGKMRIPLGVIAMIYEARPNVTAEAAALCIKSGNAVILRGGSEAIHSNLAIAHCLHQVLTTHNVDEHIVCVIPDTSRSVIEQLLQQSDTIDLVIPRGGEGLIRYVSENSRIPVIQHYKGVCHLYIDKYADLDKAVNILVNGKTQKPSACNAFETVLVHSDISAKFLPLAAKALNDAAQVKVHACKNSIGFFPNAELATNEDYQAEYLAQEIAVKVVSSFDTAIGHINEFTSDHTEVIISQDISRSQKFIRQINSSVVMVNASSRFSDGNQLGLGSEIGISTSKLHAYGPMGLEALTTEKFVVFGDGQIRQ.

This sequence belongs to the gamma-glutamyl phosphate reductase family.

It localises to the cytoplasm. It carries out the reaction L-glutamate 5-semialdehyde + phosphate + NADP(+) = L-glutamyl 5-phosphate + NADPH + H(+). Its pathway is amino-acid biosynthesis; L-proline biosynthesis; L-glutamate 5-semialdehyde from L-glutamate: step 2/2. Functionally, catalyzes the NADPH-dependent reduction of L-glutamate 5-phosphate into L-glutamate 5-semialdehyde and phosphate. The product spontaneously undergoes cyclization to form 1-pyrroline-5-carboxylate. The chain is Gamma-glutamyl phosphate reductase from Colwellia psychrerythraea (strain 34H / ATCC BAA-681) (Vibrio psychroerythus).